The sequence spans 167 residues: MRTLMIEPLTKEAFAPFGDVIETDGSDHFMINNGSTMRFHKLATVETAEPEDKAIISIFRADALDMPLTVRMLERHPLGSQAFIPLLGNPFLIVVAPVGDAPVSGLVRAFRSNGRQGVNYHRGVWHHPVLTIEKRDDFLVVDRSGSGNNCDEHYFTEEQMLILNPHQ.

Belongs to the ureidoglycolate lyase family. In terms of assembly, homodimer. Requires Ni(2+) as cofactor.

The enzyme catalyses (S)-ureidoglycolate = urea + glyoxylate. It participates in nitrogen metabolism; (S)-allantoin degradation. Functionally, catalyzes the catabolism of the allantoin degradation intermediate (S)-ureidoglycolate, generating urea and glyoxylate. Involved in the utilization of allantoin as nitrogen source. The polypeptide is Ureidoglycolate lyase (Pseudomonas putida (strain W619)).